The chain runs to 637 residues: Biosynthetic arginine decarboxylase (637 aa).

Lysine 101 is modified (N6-(pyridoxal phosphate)lysine). 286-296 (FDVGGGLAVDY) lines the substrate pocket.

The protein belongs to the Orn/Lys/Arg decarboxylase class-II family. SpeA subfamily. Requires Mg(2+) as cofactor. The cofactor is pyridoxal 5'-phosphate.

The enzyme catalyses L-arginine + H(+) = agmatine + CO2. Its pathway is amine and polyamine biosynthesis; agmatine biosynthesis; agmatine from L-arginine: step 1/1. Its function is as follows. Catalyzes the biosynthesis of agmatine from arginine. This Shewanella putrefaciens (strain CN-32 / ATCC BAA-453) protein is Biosynthetic arginine decarboxylase.